A 242-amino-acid polypeptide reads, in one-letter code: Small ribosomal subunit protein uS3 (242 aa).

The KH type-2 domain maps to I39–E110. Residues G221–G242 are disordered. A compositionally biased stretch (basic and acidic residues) spans Q233–G242.

This sequence belongs to the universal ribosomal protein uS3 family. In terms of assembly, part of the 30S ribosomal subunit. Forms a tight complex with proteins S10 and S14.

Its function is as follows. Binds the lower part of the 30S subunit head. Binds mRNA in the 70S ribosome, positioning it for translation. The polypeptide is Small ribosomal subunit protein uS3 (Parasynechococcus marenigrum (strain WH8102)).